The sequence spans 80 residues: Homeobox protein 7 (80 aa).

The homeobox DNA-binding region spans Ser-8–Ser-67. The tract at residues Arg-60 to Lys-80 is disordered. Residues Asn-70–Lys-80 show a composition bias toward low complexity.

The protein resides in the nucleus. In terms of biological role, putative transcription factor. This Dictyostelium discoideum (Social amoeba) protein is Homeobox protein 7 (hbx7).